We begin with the raw amino-acid sequence, 219 residues long: Protein P25 (219 aa).

The short motif at 57–62 (KRIRFR) is the Nuclear localization signal element. The tract at residues 103–146 (DPTRLDSSVNELLVSNGLVTHYDRVHNVPIHTDGFEVVDFTTVF) is transcription activation. Positions 169–178 (VYMVCLVNTV) match the Nuclear export signal motif.

This sequence belongs to the benyvirus P25 protein family. In terms of assembly, homooligomer.

It is found in the host cytoplasm. It localises to the host nucleus. Pathogenicity factor implicated in symptom exacerbation. Might function as transcription activator (Potential). This Beet necrotic yellow vein virus (isolate Japan/S) (BNYVV) protein is Protein P25.